A 424-amino-acid polypeptide reads, in one-letter code: Protein shisa-9 (424 aa).

The signal sequence occupies residues Met1–Ala23. Over Gln24–Lys149 the chain is Extracellular. Asn45, Asn89, and Asn116 each carry an N-linked (GlcNAc...) asparagine glycan. Residues Thr150–Phe170 traverse the membrane as a helical segment. Over Thr171–Val424 the chain is Cytoplasmic. Disordered regions lie at residues Pro333–Pro373 and Leu389–Val424. 2 stretches are compositionally biased toward polar residues: residues Tyr362–Pro373 and Thr402–Val424.

This sequence belongs to the shisa family. SHISA9 subfamily. Component of some AMPA receptors (ionotropic glutamate receptors) complex, at least composed of some AMPA receptor (GRIA1, GRIA2 and/or GRIA3), CACNG2 and SHISA9, as well as low level of DLG4. As to expression, brain-specific. Mainly expressed in neurons, including in hippocampus, cerebral cortex, striatum, thalamus, olfactory bulb and cerebellum. Expressed in most brain structures during embryonic and postnatal development.

Its subcellular location is the cell projection. It is found in the dendritic spine membrane. The protein localises to the synapse. In terms of biological role, regulator of short-term neuronal synaptic plasticity in the dentate gyrus. Associates with AMPA receptors (ionotropic glutamate receptors) in synaptic spines and promotes AMPA receptor desensitization at excitatory synapses. The polypeptide is Protein shisa-9 (Shisa9) (Mus musculus (Mouse)).